A 147-amino-acid chain; its full sequence is Sentan (147 aa).

A disordered region spans residues Arg14–Met34. Residues Pro25–Met34 are compositionally biased toward polar residues.

Belongs to the S-100 family.

It is found in the cell projection. The protein localises to the cilium. Functionally, may be a component of the linker structure that bridges the ciliary membrane and peripheral singlet microtubules. This is Sentan (SNTN) from Bos taurus (Bovine).